The sequence spans 249 residues: Isoprenyl transferase (249 aa).

Residue Asp25 is part of the active site. Position 25 (Asp25) interacts with Mg(2+). Substrate-binding positions include 26-29, Trp30, Arg38, His42, and 70-72; these read GNGR and STE. The active-site Proton acceptor is the Asn73. Substrate contacts are provided by residues Trp74, Arg76, Arg197, and 203–205; that span reads RLS. Glu216 is a binding site for Mg(2+).

Belongs to the UPP synthase family. Homodimer. Requires Mg(2+) as cofactor.

Its function is as follows. Catalyzes the condensation of isopentenyl diphosphate (IPP) with allylic pyrophosphates generating different type of terpenoids. The chain is Isoprenyl transferase from Streptococcus mutans serotype c (strain ATCC 700610 / UA159).